Reading from the N-terminus, the 262-residue chain is Urease accessory protein UreD (262 aa).

The protein belongs to the UreD family. In terms of assembly, ureD, UreF and UreG form a complex that acts as a GTP-hydrolysis-dependent molecular chaperone, activating the urease apoprotein by helping to assemble the nickel containing metallocenter of UreC. The UreE protein probably delivers the nickel.

Its subcellular location is the cytoplasm. In terms of biological role, required for maturation of urease via the functional incorporation of the urease nickel metallocenter. This is Urease accessory protein UreD from Acetivibrio thermocellus (strain ATCC 27405 / DSM 1237 / JCM 9322 / NBRC 103400 / NCIMB 10682 / NRRL B-4536 / VPI 7372) (Clostridium thermocellum).